Here is a 614-residue protein sequence, read N- to C-terminus: NEDD8 ultimate buster 1 (614 aa).

Coiled-coil stretches lie at residues 36–71 (LAVK…IERG) and 151–206 (NVKA…MVVD). 3 UBA domains span residues 373 to 413 (YIDP…ISNR), 423 to 469 (EEKE…LLSN), and 488 to 528 (SPSQ…LAHH). The Nuclear localization signal signature appears at 413-430 (RREELAQIRKEEKEKRRR). The NEDD8-binding 1 stretch occupies residues 426 to 473 (EKRRRRLENVNTLRGMGYSTQAAKQALHQARGNLDDALKVLLSNPHMW). A disordered region spans residues 531–590 (SLPPDLQFSGEDSSPTPSTSPSDSAGTSSASTDEDMETEAVNEILEDIPEHEEDYLDSTL). The segment covering 539–561 (SGEDSSPTPSTSPSDSAGTSSAS) has biased composition (low complexity). An NEDD8-binding 2 region spans residues 549–597 (TSPSDSAGTSSASTDEDMETEAVNEILEDIPEHEEDYLDSTLEDEEVII). Acidic residues predominate over residues 562–590 (TDEDMETEAVNEILEDIPEHEEDYLDSTL).

As to quaternary structure, directly interacts with NEDD8 and PSMD4/S5a, a member of the regulatory subunit of the 26S proteasome. Interacts with AIPL1. The interaction with UBD via UBA domains facilitates the linking of UBD-conjugated target protein to the proteasome complex and accelerates UBD degradation and that of its conjugates.

It localises to the nucleus. Specific down-regulator of the NEDD8 conjugation system. Recruits NEDD8, UBD, and their conjugates to the proteasome for degradation. This is NEDD8 ultimate buster 1 (Nub1) from Mus musculus (Mouse).